Consider the following 86-residue polypeptide: Putative pro-MCH-like protein 1 (86 aa).

The tract at residues 31-49 (GSVAFPAENGVQDTESTQE) is NGE-like. The disordered stretch occupies residues 38-62 (ENGVQDTESTQEKRETGDEENSAKF). An NEI-like region spans residues 52-64 (ETGDEENSAKFPV). The segment at 68 to 86 (DFDTLSCMLGRVYQSCWQV) is melanin-concentrating hormone-like.

Belongs to the melanin-concentrating hormone family. Expressed in testis and brain.

The chain is Putative pro-MCH-like protein 1 (PMCHL1) from Homo sapiens (Human).